A 189-amino-acid polypeptide reads, in one-letter code: MAGYSTSEFKSGLKVMMDGDPYTIMENEFVKPGKGQAFNRVKLRNLKTGRVIDRTFKSGDSLEAADVIETQLQYLYSDGEFWHLMSPETYEQYSADAAAVGDSTKWLKEQDTCTVTLWNGAPLLVSPPNFVTLKVTETDPGIRGDTSGGGSKPATLETGAVVRVPLFIDVGEMLKIDTRTGEYVERAKE.

Lys-34 is modified (N6-(3,6-diaminohexanoyl)-5-hydroxylysine).

It belongs to the elongation factor P family. May be beta-lysylated on the epsilon-amino group of Lys-34 by the combined action of EpmA and EpmB, and then hydroxylated on the C5 position of the same residue by EpmC (if this protein is present). Lysylation is critical for the stimulatory effect of EF-P on peptide-bond formation. The lysylation moiety may extend toward the peptidyltransferase center and stabilize the terminal 3-CCA end of the tRNA. Hydroxylation of the C5 position on Lys-34 may allow additional potential stabilizing hydrogen-bond interactions with the P-tRNA.

The protein localises to the cytoplasm. It participates in protein biosynthesis; polypeptide chain elongation. Functionally, involved in peptide bond synthesis. Alleviates ribosome stalling that occurs when 3 or more consecutive Pro residues or the sequence PPG is present in a protein, possibly by augmenting the peptidyl transferase activity of the ribosome. Modification of Lys-34 is required for alleviation. This chain is Elongation factor P, found in Nitrosococcus oceani (strain ATCC 19707 / BCRC 17464 / JCM 30415 / NCIMB 11848 / C-107).